A 189-amino-acid chain; its full sequence is UPF0301 protein bbp_491 (189 aa).

This sequence belongs to the UPF0301 (AlgH) family.

The sequence is that of UPF0301 protein bbp_491 from Buchnera aphidicola subsp. Baizongia pistaciae (strain Bp).